The chain runs to 885 residues: DNA polymerase eta (885 aa).

Residues 18–274 (VLLVDMDCFF…LPVGKIKGLG (257 aa)) enclose the UmuC domain. Mg(2+)-binding residues include aspartate 22 and methionine 23. The Mn(2+) site is built by aspartate 22 and methionine 23. An a 2'-deoxyribonucleoside 5'-triphosphate-binding site is contributed by arginine 70. Mg(2+)-binding residues include aspartate 125 and glutamate 126. Mn(2+) contacts are provided by aspartate 125 and glutamate 126. Residue glutamate 126 is part of the active site. Disordered stretches follow at residues 599-653 (AIEA…DLYV) and 658-677 (VPPT…RKFD). Residues 608–618 (FEEDTEEETEL) are compositionally biased toward acidic residues. Residues 628–649 (EGQSSDAGQEQDPNTLNDSTGN) show a composition bias toward polar residues. The UBZ3-type 1 zinc finger occupies 701-737 (DILPTIKCDQCGANIPDEVKSLQTHRDHHFAQELSRT). Positions 708, 711, 725, and 729 each coordinate Zn(2+). Residues 722-783 (LQTHRDHHFA…YSTAPPSNSI (62 aa)) are disordered. The segment covering 739 to 748 (RSTEREERTQ) has biased composition (basic and acidic residues). The segment covering 766-780 (TAGSGSSSYSTAPPS) has biased composition (low complexity). Residues 798–832 (SDPQMNQCPECKAFIKCVDMPEHLDYHVARNLQRE) form a UBZ3-type 2 zinc finger. Positions 805, 808, 820, and 824 each coordinate Zn(2+). Residues 846–870 (NKEKISPVQPKKQSQKKLNSTISAS) form a disordered region.

This sequence belongs to the DNA polymerase type-Y family. As to quaternary structure, interacts (via C-terminus) with nopo. Mg(2+) serves as cofactor. The cofactor is Mn(2+). Post-translationally, ubiquitination enhanced by nopo. As to expression, expressed in ovaries and testes.

The protein resides in the nucleus. The enzyme catalyses DNA(n) + a 2'-deoxyribonucleoside 5'-triphosphate = DNA(n+1) + diphosphate. The enzyme in complex with the DNA substrate binds a third divalent metal cation. This binding is essential for catalyzing the DNA synthesis. DNA polymerase specifically involved in the DNA repair by translesion synthesis (TLS). Plays an important role in translesion synthesis, where the normal high-fidelity DNA polymerases cannot proceed and DNA synthesis stalls. Inserts one or 2 nucleotide(s) opposite the lesion. During homologous recombination (HR) repair, has a overlapping role with the error-prone translesion polymerase PolZ1/DNApol-zeta to initiate repair synthesis that is completed by end joining or another polymerase that can bind and reinitiate synthesis. Particularly important for the repair of UV-induced pyrimidine dimers and for hydroxyurea (HU)-induced DNA damage. Although inserts the correct base, may cause base transitions and transversions depending upon the context. Forms a Schiff base with 5'-deoxyribose phosphate at abasic sites, but does not have any lyase activity, preventing the release of the 5'-deoxyribose phosphate (5'-dRP) residue. This covalent trapping of the enzyme by the 5'-dRP residue inhibits its DNA synthetic activity during base excision repair, thereby avoiding high incidence of mutagenesis. The chain is DNA polymerase eta from Drosophila melanogaster (Fruit fly).